The primary structure comprises 364 residues: tRNA 2-selenouridine synthase (364 aa).

Positions 14 to 137 (LIADTPIIDV…LRQTTIQATI (124 aa)) constitute a Rhodanese domain. Residue C97 is the S-selanylcysteine intermediate of the active site.

The protein belongs to the SelU family. As to quaternary structure, monomer.

It carries out the reaction 5-methylaminomethyl-2-thiouridine(34) in tRNA + selenophosphate + (2E)-geranyl diphosphate + H2O + H(+) = 5-methylaminomethyl-2-selenouridine(34) in tRNA + (2E)-thiogeraniol + phosphate + diphosphate. It catalyses the reaction 5-methylaminomethyl-2-thiouridine(34) in tRNA + (2E)-geranyl diphosphate = 5-methylaminomethyl-S-(2E)-geranyl-thiouridine(34) in tRNA + diphosphate. The enzyme catalyses 5-methylaminomethyl-S-(2E)-geranyl-thiouridine(34) in tRNA + selenophosphate + H(+) = 5-methylaminomethyl-2-(Se-phospho)selenouridine(34) in tRNA + (2E)-thiogeraniol. The catalysed reaction is 5-methylaminomethyl-2-(Se-phospho)selenouridine(34) in tRNA + H2O = 5-methylaminomethyl-2-selenouridine(34) in tRNA + phosphate. Involved in the post-transcriptional modification of the uridine at the wobble position (U34) of tRNA(Lys), tRNA(Glu) and tRNA(Gln). Catalyzes the conversion of 2-thiouridine (S2U-RNA) to 2-selenouridine (Se2U-RNA). Acts in a two-step process involving geranylation of 2-thiouridine (S2U) to S-geranyl-2-thiouridine (geS2U) and subsequent selenation of the latter derivative to 2-selenouridine (Se2U) in the tRNA chain. This is tRNA 2-selenouridine synthase from Escherichia coli (strain 55989 / EAEC).